Consider the following 550-residue polypeptide: CTP synthase (550 aa).

Residues 1–270 (MTKFVFVTGG…DRLICEELRL (270 aa)) are amidoligase domain. Ser-13 contacts CTP. Ser-13 is a binding site for UTP. Residues 14–19 (SLGKGI) and Asp-71 contribute to the ATP site. 2 residues coordinate Mg(2+): Asp-71 and Glu-144. CTP contacts are provided by residues 151–153 (DIE), 191–196 (KTKPTQ), and Lys-227. UTP-binding positions include 191–196 (KTKPTQ) and Lys-227. The 253-residue stretch at 295-547 (TIGMVGKYVD…VEAALASQQR (253 aa)) folds into the Glutamine amidotransferase type-1 domain. Position 356 (Gly-356) interacts with L-glutamine. The Nucleophile; for glutamine hydrolysis role is filled by Cys-383. Residues 384-387 (LGMQ), Glu-407, and Arg-473 contribute to the L-glutamine site. Catalysis depends on residues His-520 and Glu-522.

The protein belongs to the CTP synthase family. Homotetramer.

It carries out the reaction UTP + L-glutamine + ATP + H2O = CTP + L-glutamate + ADP + phosphate + 2 H(+). The catalysed reaction is L-glutamine + H2O = L-glutamate + NH4(+). The enzyme catalyses UTP + NH4(+) + ATP = CTP + ADP + phosphate + 2 H(+). The protein operates within pyrimidine metabolism; CTP biosynthesis via de novo pathway; CTP from UDP: step 2/2. Its activity is regulated as follows. Allosterically activated by GTP, when glutamine is the substrate; GTP has no effect on the reaction when ammonia is the substrate. The allosteric effector GTP functions by stabilizing the protein conformation that binds the tetrahedral intermediate(s) formed during glutamine hydrolysis. Inhibited by the product CTP, via allosteric rather than competitive inhibition. Functionally, catalyzes the ATP-dependent amination of UTP to CTP with either L-glutamine or ammonia as the source of nitrogen. Regulates intracellular CTP levels through interactions with the four ribonucleotide triphosphates. This chain is CTP synthase, found in Cupriavidus taiwanensis (strain DSM 17343 / BCRC 17206 / CCUG 44338 / CIP 107171 / LMG 19424 / R1) (Ralstonia taiwanensis (strain LMG 19424)).